A 636-amino-acid polypeptide reads, in one-letter code: MGPIDTSQRLARLRELMQERKVDVYVVPSEDSHQSEYIAHCDGRREFISGFTGSAGCAIVSMTKAALSTDGRYFNQAAKQLDNNWILLKRGFENMPTWQEWTAEQAEGGKVVGVDPSLITASDARNLSETIKKCGGSLLGVQENLVDLVWGAERPARPSEKVALHPIEFAGKSFEEKISDLRKELQKKKCAGFVISMLDEIAWLFNLRGNDIPYNPVFFAYAIITQSTADLYIDEEKLPAEVKNYLGDKVSLKPYSSIFEDAKVLGQSAQNKSDGETSTKPPQKFLISTRASWSLSLALGGEKNVEEVRSPITDAKAIKNEAELEGMRACHIRDGAALSEYFAWLENELVNKKTVLNEVDASDKLEQIRSKHQHFVGLSFDTISSTGPNAAVIHYKAERNNCSIIDPKAVYLCDSGAQYLDGTTDTTRTLHFGEPTEMEKKAYTLVLKGLISIDTAVFPKGTTGFALDAFARQYLWKEGLDYLHGTGHGVGSYLNVHEGPIGLGTRVQYSEVAIAPGNVISDEPGYYEDGVFGIRIESPFFPHLLINLPFLLTPIIDIIMAKEVKTTHKFGEKPWLGFEHVTMTPLCQKLINPSLLSDVEKKWVNDYHTEIWEKTSKYFENDELTRNWLKRETQPI.

Mn(2+) contacts are provided by D414, D425, E523, and E537.

The protein belongs to the peptidase M24B family. Mn(2+) is required as a cofactor.

The catalysed reaction is Release of any N-terminal amino acid, including proline, that is linked to proline, even from a dipeptide or tripeptide.. Functionally, catalyzes the removal of a penultimate prolyl residue from the N-termini of peptides. In Ajellomyces capsulatus (strain H143) (Darling's disease fungus), this protein is Probable Xaa-Pro aminopeptidase P (AMPP).